The sequence spans 1240 residues: MATTTQRRLEPTSIRKFGTGLGQFDLPDLTALQTVSYAAFLQEDAASNARKDHGLESVLREIFPIASYDGNTTLEYLYYELGKPRYTIQECRQLRLTYGRPLRIWLRLNREEPIEEEVYLGDLPIMLGGGEFIINGAERVVVSQLHRSPGVDFVLEQDTTTDRKLPSCRVIPERGSWIEVNVTKKDALTVRIDQSGKFAATMLLRAMDPKYSTDADLLSAFYETGTIKVNGGKDATKIENKIAVDDVVYPSGHERAGEIIVEAGYKITTELSETICNAGVTSVEAMDLPKVPLIFNTLADDNTASHEEALLRIYQRLRPGNPPQLEKARTLFQEKFYDDNRYRLGKVGRFRLNRKLGLGVEETVMTLRPDDMIAAIRYLIDLFDADSGAEIDDIDHLGNRRLRTIDELASEELRKGFLKLRRTVQERMSVKDAQDMTPRSLINPKSVSAAIDFFFGRGELSQVVDQTNPLSQLAHERRLSALGPGGLNRKRAGFEVRDVHISHYGRICPIETPEGTNIGLISSLAIYAGVDDYGFLCTPFRKVIDGKISDETVWLRADEEGESYVAPADTEVKDGALVPGPNMIARFRSDFEIVMPEQVSFMDVAPAQMVGVSAGLIPFLEHDDANRALMGSNMQRQAVPLLVTEPPIVGTGMEREVAKNSAMVVRARRAGKVTYADATRIEIGSDHYPLKKYQGLNERTCQNQKPLITVGDKVEKGQIIADGAATQKGELALGRNVLVGFMSFDGFNYEDAIIISEELVRNDTYTSIHIEDFDVEIRETKLGREEFTRDIPNVSEKALRNLDDTGIVQTGTYVKPGDILVGKVSPKSKTELTPEEKLLHAIFGRAGEDVKNDSLEVPSGIEGIVIDTQKFSRRMSLGEDERKAFERELKQHETEGNEEIASTFESLIRDMEEASGVKLKDSTGTPLADGQDPKFVAERATSFRLELVLEQIEDEEKRKAAEKVHQTQWQNVEQAIDERDRKLNSMKRGDELRSGVLQMVKIYIATKRTISVGDKMAGRHGNKGVIAKILPIEDMPFLPDGTPIQIMLNPLGVPSRMNVGQILETHLGWAGAKLGFQALTPIFDGASESEINDCLAEAGLPAHGKIRLTDGRTGEPMEQETTVGYIYMLKLHHLVDDKVHARSTGPYSLITQQPLGGKARFGGQRFGEMEVWALEAYGAAYILQELLTVKSDDVEGRTKIYESMVKGENTLEAGTPASFDVLTNEIRGLALNMQLEKRPI.

This sequence belongs to the RNA polymerase beta chain family. As to quaternary structure, the RNAP catalytic core consists of 2 alpha, 1 beta, 1 beta' and 1 omega subunit. When a sigma factor is associated with the core the holoenzyme is formed, which can initiate transcription.

The enzyme catalyses RNA(n) + a ribonucleoside 5'-triphosphate = RNA(n+1) + diphosphate. Its function is as follows. DNA-dependent RNA polymerase catalyzes the transcription of DNA into RNA using the four ribonucleoside triphosphates as substrates. The protein is DNA-directed RNA polymerase subunit beta of Rhodopirellula baltica (strain DSM 10527 / NCIMB 13988 / SH1).